Consider the following 88-residue polypeptide: Small ribosomal subunit protein uS15c (88 aa).

This sequence belongs to the universal ribosomal protein uS15 family. In terms of assembly, part of the 30S ribosomal subunit.

Its subcellular location is the plastid. It localises to the chloroplast. The sequence is that of Small ribosomal subunit protein uS15c (rps15) from Arabis hirsuta (Hairy rock-cress).